Consider the following 473-residue polypeptide: MAPPAARLALLSAAALTLAARPAPGPRSGPECFTANGADYRGTQSWTALQGGKPCLFWNETFQHPYNTLKYPNGEGGLGEHNYCRNPDGDVSPWCYVAEHEDGVYWKYCEIPACQMPGNLGCYKDHGNPPPLTGTSKTSNKLTIQTCISFCRSQRFKFAGMESGYACFCGNNPDYWKHGEAASTECNSVCFGDHTQPCGGDGRIILFDTLVGACGGNYSAMAAVVYSPDFPDTYATGRVCYWTIRVPGASRIHFNFTLFDIRDSADMVELLDGYTHRVLVRLSGRSRPPLSFNVSLDFVILYFFSDRINQAQGFAVLYQATKEEPPQERPAVNQTLAEVITEQANLSVSAAHSSKVLYVITPSPSHPPQTAPGSHSWAPSVGANSHRVEGWTVYGLATLLILTVTAVVAKILLHVTFKSHRVPASGDLRDCRQPGASGDIWTIFYEPSTTISIFKKKLKGQSQQDDRNPLVSD.

The signal sequence occupies residues 1-19 (MAPPAARLALLSAAALTLA). Residues 21 to 392 (RPAPGPRSGP…ANSHRVEGWT (372 aa)) are Extracellular-facing. Residues 31 to 114 (ECFTANGADY…YWKYCEIPAC (84 aa)) enclose the Kringle domain. Disulfide bonds link Cys-32–Cys-114, Cys-55–Cys-95, Cys-84–Cys-109, Cys-122–Cys-186, Cys-147–Cys-167, Cys-151–Cys-169, Cys-190–Cys-198, and Cys-214–Cys-240. Asn-59 is a glycosylation site (N-linked (GlcNAc...) asparagine). A WSC domain is found at 116 to 210 (MPGNLGCYKD…DGRIILFDTL (95 aa)). In terms of domain architecture, CUB spans 214–321 (CGGNYSAMAA…QGFAVLYQAT (108 aa)). 5 N-linked (GlcNAc...) asparagine glycosylation sites follow: Asn-217, Asn-255, Asn-293, Asn-333, and Asn-345. The helical transmembrane segment at 393-413 (VYGLATLLILTVTAVVAKILL) threads the bilayer. The Cytoplasmic segment spans residues 414–473 (HVTFKSHRVPASGDLRDCRQPGASGDIWTIFYEPSTTISIFKKKLKGQSQQDDRNPLVSD). The segment at 414–473 (HVTFKSHRVPASGDLRDCRQPGASGDIWTIFYEPSTTISIFKKKLKGQSQQDDRNPLVSD) is essential for apoptotic activity.

As to quaternary structure, forms a ternary complex with DKK1 and LRP6. Interacts with LRP6 in a DKK1-dependent manner. Interacts with DKK1 and RSPO1 (via FU repeats). In terms of tissue distribution, in the adult, widely expressed with high levels in heart, lung, kidney, skeletal muscle and testis.

It localises to the cell membrane. Functionally, receptor for Dickkopf proteins. Cooperates with DKK1/2 to inhibit Wnt/beta-catenin signaling by promoting the endocytosis of Wnt receptors LRP5 and LRP6. In the absence of DKK1, potentiates Wnt-beta-catenin signaling by maintaining LRP5 or LRP6 at the cell membrane. Can trigger apoptosis in a Wnt-independent manner and this apoptotic activity is inhibited upon binding of the ligand DKK1. Plays a role in limb development; attenuates Wnt signaling in the developing limb to allow normal limb patterning and can also negatively regulate bone formation. Modulates cell fate decisions in the developing cochlea with an inhibitory role in hair cell fate specification. The sequence is that of Kremen protein 1 (Kremen1) from Mus musculus (Mouse).